A 483-amino-acid chain; its full sequence is ATP synthase subunit beta (483 aa).

An ATP-binding site is contributed by 169-176 (GGAGVGKT).

Belongs to the ATPase alpha/beta chains family. As to quaternary structure, F-type ATPases have 2 components, CF(1) - the catalytic core - and CF(0) - the membrane proton channel. CF(1) has five subunits: alpha(3), beta(3), gamma(1), delta(1), epsilon(1). CF(0) has three main subunits: a(1), b(2) and c(9-12). The alpha and beta chains form an alternating ring which encloses part of the gamma chain. CF(1) is attached to CF(0) by a central stalk formed by the gamma and epsilon chains, while a peripheral stalk is formed by the delta and b chains.

Its subcellular location is the cell membrane. It carries out the reaction ATP + H2O + 4 H(+)(in) = ADP + phosphate + 5 H(+)(out). Functionally, produces ATP from ADP in the presence of a proton gradient across the membrane. The catalytic sites are hosted primarily by the beta subunits. This chain is ATP synthase subunit beta, found in Rhodococcus erythropolis (strain PR4 / NBRC 100887).